The primary structure comprises 157 residues: Frd operon probable iron-sulfur subunit A (157 aa).

3 4Fe-4S ferredoxin-type domains span residues 24 to 55 (KGFSISTAVVCHQCEDAPCANVCPNGAIIHNK), 56 to 85 (DYYYVDQDKCIGCKTCVLACPYGTMEVVSR), and 100 to 133 (FKAEANKCDLCHHRAEGPACVEVCPTQALVCIDR). Cysteine 34, cysteine 37, cysteine 42, cysteine 46, cysteine 65, cysteine 68, cysteine 71, cysteine 75, cysteine 107, cysteine 110, cysteine 119, and cysteine 123 together coordinate [4Fe-4S] cluster.

The chain is Frd operon probable iron-sulfur subunit A from Proteus vulgaris.